The primary structure comprises 162 residues: MPCSEDAAAVSASKRARAEDGASLRFVRLSEHATAPTRGSARAAGYDLFSAYDYTISPMEKAIVKTDIQIAVPSGCYGRVAPRSGLAVKHFIDVGAGVIDEDYRGNVGVVLFNFGKEKFEVKKGDRIAQLICERISYPDLEEVQTLDDTERGSGGFGSTGKN.

The residue at position 11 (S11) is a Phosphoserine. DUTP contacts are provided by residues 83 to 85 (RSG), 97 to 103 (GVIDEDY), G108, R151, and 156 to 157 (FG).

Belongs to the dUTPase family. Homotrimer. The cofactor is Mg(2+). In terms of processing, phosphorylated in vivo on Ser-11, a reaction that can be catalyzed in vitro by CDC2.

It is found in the nucleus. It catalyses the reaction dUTP + H2O = dUMP + diphosphate + H(+). It participates in pyrimidine metabolism; dUMP biosynthesis; dUMP from dCTP (dUTP route): step 2/2. Catalyzes the cleavage of 2'-deoxyuridine 5'-triphosphate (dUTP) into 2'-deoxyuridine 5'-monophosphate (dUMP) and inorganic pyrophosphate and through its action efficiently prevents uracil misincorporation into DNA and at the same time provides dUMP, the substrate for de novo thymidylate biosynthesis. Inhibits peroxisome proliferator-activated receptor (PPAR) activity by binding of its N-terminal to PPAR, preventing the latter's dimerization with retinoid X receptor. Essential for embryonic development. The sequence is that of Deoxyuridine 5'-triphosphate nucleotidohydrolase (Dut) from Mus musculus (Mouse).